Reading from the N-terminus, the 569-residue chain is Santalene synthase (569 aa).

Arg284, Asp321, Asp325, and Arg460 together coordinate (2E)-geranyl diphosphate. Mg(2+)-binding residues include Asp321 and Asp325. Residues 321–325 (DDAYD) carry the DDXXD motif motif. Positions 463, 467, and 471 each coordinate Mg(2+).

Belongs to the terpene synthase family. Tpsb subfamily. Mg(2+) serves as cofactor. The cofactor is Mn(2+).

It catalyses the reaction (2E,6E)-farnesyl diphosphate = (1S,5S,6R)-alpha-bergamotene + diphosphate. The enzyme catalyses (2E,6E)-farnesyl diphosphate = (+)-alpha-santalene + diphosphate. It carries out the reaction (2E,6E)-farnesyl diphosphate = (-)-beta-santalene + diphosphate. In terms of biological role, catalyzes a mixture of sesquiterpenoids from (2E,6E)-farnesyl diphosphate in fragrance biosynthesis. Catalyzes the formation of alpha-santalene, beta-santalene, epi-beta-santalene and exo-alpha-bergamotene, as well as traces of alpha-farnesene and beta-farnesene. The polypeptide is Santalene synthase (Santalum austrocaledonicum (Sandalwood)).